Here is an 88-residue protein sequence, read N- to C-terminus: uncharacterized protein (88 aa).

A helical transmembrane segment spans residues 34-54 (IIIAVILIFFLTIVGLFYLII).

The protein localises to the membrane. This is an uncharacterized protein from Ureaplasma parvum serovar 3 (strain ATCC 700970).